The primary structure comprises 506 residues: Parthenolide synthase (506 aa).

A helical membrane pass occupies residues 10–30; it reads LFLPTLCTILISYIIIKYVLI. 5 N-linked (GlcNAc...) asparagine glycosylation sites follow: N32, N63, N121, N168, and N175. Residues 301–321 traverse the membrane as a helical segment; that stretch reads LLLNVLLGAIDTTFTTIVWAM. Heme is bound at residue C448.

This sequence belongs to the cytochrome P450 family.

It localises to the membrane. It carries out the reaction (+)-costunolide + reduced [NADPH--hemoprotein reductase] + O2 = parthenolide + oxidized [NADPH--hemoprotein reductase] + H2O + H(+). It functions in the pathway secondary metabolite biosynthesis; terpenoid biosynthesis. Its function is as follows. Involved in the biosynthesis of germacrene-derived sesquiterpene lactones. Component of the parthenolide biosynthetic pathway; parthenolide and conjugates are promising anti-cancer drugs highly active against colon cancer cells. Catalyzes the conversion of costunolide to parthenolide. The polypeptide is Parthenolide synthase (Tanacetum parthenium (Feverfew)).